The following is a 317-amino-acid chain: Ribosomal RNA small subunit methyltransferase H (317 aa).

S-adenosyl-L-methionine-binding positions include 30–32 (GGH), Asp50, Tyr78, Asp95, and Gln102.

Belongs to the methyltransferase superfamily. RsmH family.

The protein localises to the cytoplasm. The catalysed reaction is cytidine(1402) in 16S rRNA + S-adenosyl-L-methionine = N(4)-methylcytidine(1402) in 16S rRNA + S-adenosyl-L-homocysteine + H(+). Specifically methylates the N4 position of cytidine in position 1402 (C1402) of 16S rRNA. The sequence is that of Ribosomal RNA small subunit methyltransferase H from Nitrosomonas eutropha (strain DSM 101675 / C91 / Nm57).